Consider the following 186-residue polypeptide: MKDTKEIKRSPPHLLKKFAVCDIPLYDICDYNVTRERCRSLDCCFYRGVCYEKAVPIYVQVFFTLIWFVAGAFIIAVIYRVIQGTKKEKKPLLPEDSQVEILKSPTPELIPEPIPEPIPEPIPEPIREPPPPVKKTESPIEAGCCLWMKSKPAKDQPQKETAAPEPPSNPEVKKVNSGSAVPQAAP.

Over 1 to 56 the chain is Extracellular; the sequence is MKDTKEIKRSPPHLLKKFAVCDIPLYDICDYNVTRERCRSLDCCFYRGVCYEKAVP. A helical membrane pass occupies residues 57–77; that stretch reads IYVQVFFTLIWFVAGAFIIAV. Topologically, residues 78-151 are cytoplasmic; it reads IYRVIQGTKK…AGCCLWMKSK (74 aa). 2 disordered regions span residues 104-138 and 151-186; these read SPTP…KTES and KPAK…QAAP. Over residues 108-133 the composition is skewed to pro residues; sequence ELIPEPIPEPIPEPIPEPIREPPPPV.

The protein resides in the membrane. The sequence is that of Testis-expressed protein 29 (Tex29) from Mus musculus (Mouse).